The chain runs to 643 residues: Replication protein E1 (643 aa).

Positions 81-83 (KRK) match the Nuclear localization signal motif. Phosphoserine; by host occurs at positions 87, 91, and 105. A Nuclear export signal motif is present at residues 104 to 113 (ISPRLDAITL). The disordered stretch occupies residues 130–166 (LTDSGYGNTEVEAETQVERNGEPEDCGGGGQGRDTEG). Residues 181 to 347 (QQHTGTTRVL…QTIVEHGLAD (167 aa)) are DNA-binding region. Residues 446 to 596 (IEFIPFLTKL…FPFDRNGNAL (151 aa)) form the SF3 helicase domain. Residue 472-479 (GPPDTGKS) coordinates ATP. Lys553 participates in a covalent cross-link: Glycyl lysine isopeptide (Lys-Gly) (interchain with G-Cter in SUMO).

The protein belongs to the papillomaviridae E1 protein family. Can form hexamers. Interacts with E2 protein; this interaction increases E1 DNA binding specificity. Interacts with host DNA polymerase subunit POLA2. Interacts with host single stranded DNA-binding protein RPA1. Interacts with host TOP1; this interaction stimulates the enzymatic activity of TOP1. Post-translationally, phosphorylated. Sumoylated.

The protein localises to the host nucleus. It carries out the reaction Couples ATP hydrolysis with the unwinding of duplex DNA by translocating in the 3'-5' direction.. It catalyses the reaction ATP + H2O = ADP + phosphate + H(+). In terms of biological role, ATP-dependent DNA 3'-5' helicase required for initiation of viral DNA replication. It forms a complex with the viral E2 protein. The E1-E2 complex binds to the replication origin which contains binding sites for both proteins. During the initial step, a dimer of E1 interacts with a dimer of protein E2 leading to a complex that binds the viral origin of replication with high specificity. Then, a second dimer of E1 displaces the E2 dimer in an ATP-dependent manner to form the E1 tetramer. Following this, two E1 monomers are added to each half of the site, which results in the formation of two E1 trimers on the viral ori. Subsequently, two hexamers will be created. The double hexamer acts as a bi-directional helicase machinery and unwinds the viral DNA and then recruits the host DNA polymerase to start replication. This Homo sapiens (Human) protein is Replication protein E1.